The following is a 151-amino-acid chain: MERPEPELIRQSWRAVRRSPLEHGTVLFARLFDLEPDLLPLFQYNCRQFSSPEDCLSSPEFLDHIRKVMLVIDTAVTNVEDLSSLEEYLAGLGKKHRAVGVKLSSFSTVGESLLYMLEKCLGPAFTPAVRAAWSQLYGAVVQAMSRGWDGD.

One can recognise a Globin domain in the interval methionine 1–aspartate 149. Residues histidine 64 and histidine 96 each contribute to the heme b site.

The protein belongs to the globin family. As to quaternary structure, monomer. Homodimer and homotetramer; disulfide-linked. Mainly monomeric but also detected as part of homodimers and homotetramers. Interacts with 14-3-3 proteins; regulates the phosphorylation of NGB. Could interact (ferrous form) with G-alpha(i) proteins (GTP-bound form). In terms of processing, phosphorylated during hypoxia by ERK1/ERK2. Phosphorylation regulates the heme pocket hexacoordination preventing the association of His-64 with the heme metal center. Thereby, promotes the access of dioxygen and nitrite to the heme and stimulates the nitrite reductase activity. Phosphorylation during hypoxia is stabilized by 14-3-3 proteins.

It localises to the cytoplasm. It is found in the cytosol. Its subcellular location is the mitochondrion matrix. It catalyses the reaction Fe(III)-heme b-[protein] + nitric oxide + H2O = Fe(II)-heme b-[protein] + nitrite + 2 H(+). In terms of biological role, monomeric globin with a bis-histidyl six-coordinate heme-iron atom through which it can bind dioxygen, carbon monoxide and nitric oxide. Could help transport oxygen and increase its availability to the metabolically active neuronal tissues, though its low quantity in tissues as well as its high affinity for dioxygen, which may limit its oxygen-releasing ability, argue against it. The ferrous/deoxygenated form exhibits a nitrite reductase activity and it could produce nitric oxide which in turn inhibits cellular respiration in response to hypoxia. In its ferrous/deoxygenated state, it may also exhibit GDI (Guanine nucleotide Dissociation Inhibitor) activity toward heterotrimeric G-alpha proteins, thereby regulating signal transduction to facilitate neuroprotective responses in the wake of hypoxia and associated oxidative stress. This is Neuroglobin from Canis lupus familiaris (Dog).